A 352-amino-acid polypeptide reads, in one-letter code: Protein pelota homolog (352 aa).

It belongs to the eukaryotic release factor 1 family. Pelota subfamily. In terms of assembly, monomer. A divalent metal cation serves as cofactor.

It localises to the cytoplasm. May function in recognizing stalled ribosomes, interact with stem-loop structures in stalled mRNA molecules, and effect endonucleolytic cleavage of the mRNA. May play a role in the release non-functional ribosomes and degradation of damaged mRNAs. Has endoribonuclease activity. This Thermofilum pendens (strain DSM 2475 / Hrk 5) protein is Protein pelota homolog.